The sequence spans 125 residues: Putative oxygen-evolving enhancer protein 2-2 (125 aa).

Phosphoserine is present on Ser-15.

Belongs to the PsbP family.

The protein is Putative oxygen-evolving enhancer protein 2-2 (PSBP2) of Arabidopsis thaliana (Mouse-ear cress).